The following is a 467-amino-acid chain: Asparagine--tRNA ligase (467 aa).

The protein belongs to the class-II aminoacyl-tRNA synthetase family. Homodimer.

Its subcellular location is the cytoplasm. It catalyses the reaction tRNA(Asn) + L-asparagine + ATP = L-asparaginyl-tRNA(Asn) + AMP + diphosphate + H(+). The protein is Asparagine--tRNA ligase of Haemophilus influenzae (strain PittGG).